Here is a 554-residue protein sequence, read N- to C-terminus: Urocanate hydratase (554 aa).

NAD(+) contacts are provided by residues 51-52 (GG), Gln129, 175-177 (GMG), Glu195, 241-242 (NA), 262-266 (QTSAH), 272-273 (YL), and Tyr321. Cys409 is a catalytic residue. Gly491 serves as a coordination point for NAD(+).

This sequence belongs to the urocanase family. NAD(+) serves as cofactor.

It localises to the cytoplasm. The enzyme catalyses 4-imidazolone-5-propanoate = trans-urocanate + H2O. It participates in amino-acid degradation; L-histidine degradation into L-glutamate; N-formimidoyl-L-glutamate from L-histidine: step 2/3. Functionally, catalyzes the conversion of urocanate to 4-imidazolone-5-propionate. This Methylobacterium nodulans (strain LMG 21967 / CNCM I-2342 / ORS 2060) protein is Urocanate hydratase.